The chain runs to 197 residues: Ras-related protein RabG2 (197 aa).

Residues 13 to 20, 61 to 65, and 119 to 122 each bind GTP; these read GDSAVGKT, DTAGQ, and NKCD. The segment at 175 to 197 is disordered; sequence SKPSVVNPGSGGTSNTGGKKKFC. Cys197 carries S-geranylgeranyl cysteine lipidation.

It belongs to the small GTPase superfamily. Rab family.

The protein resides in the cell membrane. The sequence is that of Ras-related protein RabG2 (rabG2) from Dictyostelium discoideum (Social amoeba).